A 151-amino-acid chain; its full sequence is Large ribosomal subunit protein bL9 (151 aa).

It belongs to the bacterial ribosomal protein bL9 family.

Functionally, binds to the 23S rRNA. The protein is Large ribosomal subunit protein bL9 of Acidobacterium capsulatum (strain ATCC 51196 / DSM 11244 / BCRC 80197 / JCM 7670 / NBRC 15755 / NCIMB 13165 / 161).